Consider the following 185-residue polypeptide: Cuticle protein 18.6, isoform B (185 aa).

6 consecutive repeat copies span residues Ala-21–Ala-24, Ala-33–Val-36, Ala-41–Val-44, Ala-133–Val-136, Ala-139–Val-142, and Ala-150–Val-153. Positions His-64–Ala-134 constitute a Chitin-binding type R&amp;R domain.

Functionally, component of the cuticle of migratory locust which contains more than 100 different structural proteins. This is Cuticle protein 18.6, isoform B from Locusta migratoria (Migratory locust).